The chain runs to 354 residues: uncharacterized protein (354 aa).

Positions 1–21 (MRYLLIVITFFMGFSSLPAWA) are cleaved as a signal peptide.

To E.coli YbgO.

Its function is as follows. May be involved in a fimbrial system chaperoned by YqiH and exported by YqiG. This is an uncharacterized protein from Escherichia coli (strain K12).